Here is a 71-residue protein sequence, read N- to C-terminus: Movement protein TGBp3 (71 aa).

At 1–4 (MWSD) the chain is on the lumenal side. The chain crosses the membrane as a helical span at residues 5–27 (SLVSRICVPIIVVCTSIALLNVV). The Cytoplasmic segment spans residues 28–71 (SFRSECSCVVHISGAAIDIRGCSFTPDFIEYAKTLRVFNHRYQE).

This sequence belongs to the Tymovirales TGBp3 protein family.

The protein resides in the host endoplasmic reticulum membrane. Functionally, plays a role in viral cell-to-cell propagation, by facilitating genome transport to neighboring plant cells through plasmosdesmata. May induce the formation of granular vesicles derived from the Endoplasmic reticulum, which align on actin filaments. In Populus balsamifera (Balsam poplar), this protein is Movement protein TGBp3.